The following is a 512-amino-acid chain: Tyrosine-protein kinase Lyn (512 aa).

Residues 1-50 (MGCIKSKRKDNLNDDGVDMKTQPVRNTDRTIYVRDPTSNKQQRPVPESQL) are disordered. Glycine 2 is lipidated: N-myristoyl glycine. Cysteine 3 carries S-palmitoyl cysteine lipidation. An SH3 domain is found at 63 to 123 (EQGDIVVALY…PSNYVAKVNT (61 aa)). In terms of domain architecture, SH2 spans 129-226 (WFFKDITRKD…GLCRRLEKAC (98 aa)). The residue at position 193 (tyrosine 193) is a Phosphotyrosine. Residue serine 228 is modified to Phosphoserine. A Protein kinase domain is found at 247 to 501 (IKLVKKLGAG…YLQSVLDDFY (255 aa)). Residues 253 to 261 (LGAGQFGEV) and lysine 275 each bind ATP. Phosphotyrosine occurs at positions 306 and 316. The active-site Proton acceptor is aspartate 367. Tyrosine 397 carries the phosphotyrosine; by autocatalysis modification. Tyrosine 460 and tyrosine 473 each carry phosphotyrosine. Position 508 is a phosphotyrosine; by autocatalysis, CSK and MATK (tyrosine 508).

Belongs to the protein kinase superfamily. Tyr protein kinase family. SRC subfamily. In terms of assembly, interacts with TEC. Interacts (via SH2 domain) with FLT3 (tyrosine phosphorylated). Interacts with LIME1 and with CD79A upon activation of the B-cell antigen receptor. Interacts with the B-cell receptor complex. Interacts with phosphorylated THEMIS2. Interacts with EPOR. Interacts with MS4A2/FCER1B. Interaction (via the SH2 and SH3 domains) with MUC1 is stimulated by IL7 and the subsequent phosphorylation increases the binding between MUC1 and CTNNB1/beta-catenin. Interacts with ADAM15. Interacts with NDFIP2 and more weakly with NDFIP1. Interacts with FASLG. Interacts with KIT. Interacts with HCLS1. Interacts with FCGR2B. Interacts with FCGR1A; the interaction may be indirect. Interacts with CD19, CD22, CD79A and CD79B. Interacts (via SH3 domain) with CBLC, PPP1R15A and PDE4A. Interacts with TGFB1I1. Interacts (via SH3 domain) with PIK3R1, the regulatory subunit of phosphatidylinositol 3-kinase; this interaction enhances phosphatidylinositol 3-kinase activity. Interacts with CSF2RB, the common subunit of the IL3, IL5 and CSF2 receptors. Interacts with PAG1; identified in a complex with PAG1 and STAT3. Interacts with ABL1. Interacts with PTPN6/SHP-1. Interacts (via SH3 domain) with SCIMP (via proline-rich region). This interaction facilitates the phosphorylation of SCIMP 'Tyr-96', which enhances binding of SCIMP to TLR4, and consequently the phosphorylation of TLR4 in response to stimulation by lipopolysaccharide in macrophages. Interacts with LPXN (via LD motif 3) and the interaction is induced upon B-cell antigen receptor (BCR) activation. Interacts (via SH3-domain) with ANKRD54 (via ankyrin repeat region) in an activation-independent status of LYN. Forms a multiprotein complex with ANKRD54 and HCLS1. Interacts (via SH2 and SH3 domains) with UNC119; leading to LYN activation. Interacts with CD36. Interacts with LYN. Interacts with SKAP1 and FYB1; this interaction promotes the phosphorylation of CLNK. Interacts with BCAR1/CAS and NEDD9/HEF1. In terms of processing, ubiquitinated. Ubiquitination is SH3-dependent. Autophosphorylated. Phosphorylated on tyrosine residues in response to KIT signaling. Phosphorylation at Tyr-397 is required for optimal activity. Phosphorylation at Tyr-508 inhibits kinase activity. Phosphorylated at Tyr-508 by CSK. Dephosphorylated by PTPRC/CD45. Becomes rapidly phosphorylated upon activation of the B-cell receptor and the immunoglobulin receptor FCGR1A. Phosphorylated in response to integrin ITGB1 in B-cells. Detected in spleen (at protein level). Expressed predominantly in B-lymphoid and myeloid cells.

The protein resides in the cell membrane. It localises to the nucleus. The protein localises to the cytoplasm. Its subcellular location is the perinuclear region. It is found in the golgi apparatus. The protein resides in the membrane. It carries out the reaction L-tyrosyl-[protein] + ATP = O-phospho-L-tyrosyl-[protein] + ADP + H(+). Subject to autoinhibition, mediated by intramolecular interactions between the SH2 domain and the C-terminal phosphotyrosine. Phosphorylation at Tyr-397 is required for optimal activity. Phosphorylated by CSK at Tyr-508; phosphorylation at Tyr-508 inhibits kinase activity. Kinase activity is modulated by dephosphorylation by PTPRC/CD45. In terms of biological role, non-receptor tyrosine-protein kinase that transmits signals from cell surface receptors and plays an important role in the regulation of innate and adaptive immune responses, hematopoiesis, responses to growth factors and cytokines, integrin signaling, but also responses to DNA damage and genotoxic agents. Functions primarily as negative regulator, but can also function as activator, depending on the context. Required for the initiation of the B-cell response, but also for its down-regulation and termination. Plays an important role in the regulation of B-cell differentiation, proliferation, survival and apoptosis, and is important for immune self-tolerance. Acts downstream of several immune receptors, including the B-cell receptor, CD79A, CD79B, CD5, CD19, CD22, FCER1, FCGR2, FCGR1A, TLR2 and TLR4. Plays a role in the inflammatory response to bacterial lipopolysaccharide. Mediates the responses to cytokines and growth factors in hematopoietic progenitors, platelets, erythrocytes, and in mature myeloid cells, such as dendritic cells, neutrophils and eosinophils. Acts downstream of EPOR, KIT, MPL, the chemokine receptor CXCR4, as well as the receptors for IL3, IL5 and CSF2. Plays an important role in integrin signaling. Regulates cell proliferation, survival, differentiation, migration, adhesion, degranulation, and cytokine release. Involved in the regulation of endothelial activation, neutrophil adhesion and transendothelial migration. Down-regulates signaling pathways by phosphorylation of immunoreceptor tyrosine-based inhibitory motifs (ITIM), that then serve as binding sites for phosphatases, such as PTPN6/SHP-1, PTPN11/SHP-2 and INPP5D/SHIP-1, that modulate signaling by dephosphorylation of kinases and their substrates. Phosphorylates LIME1 in response to CD22 activation. Phosphorylates BTK, CBL, CD5, CD19, CD72, CD79A, CD79B, CSF2RB, DOK1, HCLS1, LILRB3/PIR-B, MS4A2/FCER1B, SYK and TEC. Promotes phosphorylation of SIRPA, PTPN6/SHP-1, PTPN11/SHP-2 and INPP5D/SHIP-1. Required for rapid phosphorylation of FER in response to FCER1 activation. Mediates KIT phosphorylation. Acts as an effector of EPOR (erythropoietin receptor) in controlling KIT expression and may play a role in erythroid differentiation during the switch between proliferation and maturation. Depending on the context, activates or inhibits several signaling cascades. Regulates phosphatidylinositol 3-kinase activity and AKT1 activation. Regulates activation of the MAP kinase signaling cascade, including activation of MAP2K1/MEK1, MAPK1/ERK2, MAPK3/ERK1, MAPK8/JNK1 and MAPK9/JNK2. Mediates activation of STAT5A and/or STAT5B. Phosphorylates LPXN on 'Tyr-72'. Kinase activity facilitates TLR4-TLR6 heterodimerization and signal initiation. Phosphorylates SCIMP on 'Tyr-96'; this enhances binding of SCIMP to TLR4, promoting the phosphorylation of TLR4, and a selective cytokine response to lipopolysaccharide in macrophages. Phosphorylates CLNK. Phosphorylates BCAR1/CAS and NEDD9/HEF1. In Rattus norvegicus (Rat), this protein is Tyrosine-protein kinase Lyn (Lyn).